The chain runs to 400 residues: Na(+)/H(+) antiporter NhaA (400 aa).

Transmembrane regions (helical) follow at residues 10–30 (FNLE…AMII), 60–80 (AHHW…GLEL), 95–115 (IILP…VYLF), 126–146 (GWAI…SLLG), 155–175 (VFLV…IALF), 178–198 (NDLS…LYLL), 218–238 (VAVL…ALFI), 265–285 (GILP…AGFG), 295–315 (IAAG…WLIF), 334–354 (AALL…LAFA), and 364–384 (LGII…LKAT).

This sequence belongs to the NhaA Na(+)/H(+) (TC 2.A.33) antiporter family.

The protein resides in the cell inner membrane. The catalysed reaction is Na(+)(in) + 2 H(+)(out) = Na(+)(out) + 2 H(+)(in). Functionally, na(+)/H(+) antiporter that extrudes sodium in exchange for external protons. The sequence is that of Na(+)/H(+) antiporter NhaA from Psychrobacter cryohalolentis (strain ATCC BAA-1226 / DSM 17306 / VKM B-2378 / K5).